Consider the following 95-residue polypeptide: Large ribosomal subunit protein uL23 (95 aa).

This sequence belongs to the universal ribosomal protein uL23 family. In terms of assembly, part of the 50S ribosomal subunit. Contacts protein L29, and trigger factor when it is bound to the ribosome.

Its function is as follows. One of the early assembly proteins it binds 23S rRNA. One of the proteins that surrounds the polypeptide exit tunnel on the outside of the ribosome. Forms the main docking site for trigger factor binding to the ribosome. In Anoxybacillus flavithermus (strain DSM 21510 / WK1), this protein is Large ribosomal subunit protein uL23.